We begin with the raw amino-acid sequence, 424 residues long: DUF21 domain-containing protein At4g33700 (424 aa).

The Extracellular segment spans residues 1–11; the sequence is MAVEYVCCSPN. Positions 8–191 constitute a CNNM transmembrane domain; the sequence is CSPNFFIHIA…GKGGELTHDE (184 aa). A helical membrane pass occupies residues 12–32; that stretch reads FFIHIAVIVFLVLFAGLMSGL. The Cytoplasmic portion of the chain corresponds to 33-70; sequence TLGLMSLSLVDLEVLAKSGTPEHRKYAAKILPVVKNQH. Residues 71–91 form a helical membrane-spanning segment; sequence LLLVTLLICNAAAMETLPIFL. Topologically, residues 92–94 are extracellular; it reads DGL. Residues 95–115 form a helical membrane-spanning segment; that stretch reads VTAWGAILISVTLILLFGEII. The Cytoplasmic segment spans residues 116–136; it reads PQSICSRYGLAIGATVAPFVR. A helical membrane pass occupies residues 137-157; it reads VLVFICLPVAWPISKLLDFLL. Topologically, residues 158 to 424 are extracellular; sequence GHRRAALFRR…DETDHHFEDS (267 aa). One can recognise a CBS 1 domain in the interval 210-271; that stretch reads MTPISDIFVI…TINPDEEIPV (62 aa). N-linked (GlcNAc...) asparagine glycans are attached at residues Asn273 and Asn319. 2 CBS domains span residues 275–331 and 355–416; these read TIRR…DVDS and PNRA…IFDE. Disordered regions lie at residues 321–340 and 355–374; these read SVKE…PQER and PNRA…SKDN. Ser331 is modified (phosphoserine).

It is found in the membrane. In Arabidopsis thaliana (Mouse-ear cress), this protein is DUF21 domain-containing protein At4g33700 (CBSDUF6).